A 172-amino-acid polypeptide reads, in one-letter code: NAD(P)H-quinone oxidoreductase subunit J (172 aa).

It belongs to the complex I 30 kDa subunit family. In terms of assembly, NDH-1 can be composed of about 15 different subunits; different subcomplexes with different compositions have been identified which probably have different functions.

The protein localises to the cellular thylakoid membrane. The catalysed reaction is a plastoquinone + NADH + (n+1) H(+)(in) = a plastoquinol + NAD(+) + n H(+)(out). It carries out the reaction a plastoquinone + NADPH + (n+1) H(+)(in) = a plastoquinol + NADP(+) + n H(+)(out). NDH-1 shuttles electrons from an unknown electron donor, via FMN and iron-sulfur (Fe-S) centers, to quinones in the respiratory and/or the photosynthetic chain. The immediate electron acceptor for the enzyme in this species is believed to be plastoquinone. Couples the redox reaction to proton translocation, and thus conserves the redox energy in a proton gradient. Cyanobacterial NDH-1 also plays a role in inorganic carbon-concentration. The sequence is that of NAD(P)H-quinone oxidoreductase subunit J from Synechococcus elongatus (strain ATCC 33912 / PCC 7942 / FACHB-805) (Anacystis nidulans R2).